The following is a 429-amino-acid chain: Zinc finger protein 385C (429 aa).

The Matrin-type 1 zinc finger occupies 77-107; that stretch reads ISCNICHLRFNSANQAEAHYKGHRHARKLKA. Disordered regions lie at residues 109–224, 258–295, and 311–340; these read EAAK…GRGE, GHQG…GPSP, and QLKQ…NKLQ. Residues 125 to 146 show a composition bias toward low complexity; sequence TVVSSASPPASGSPGTPQSKGP. Over residues 147–162 the composition is skewed to pro residues; the sequence is ASPPLGPSLQLPPTPD. Over residues 181–193 the composition is skewed to low complexity; sequence CDAAASSSSSSCP. The Matrin-type 2 zinc-finger motif lies at 225-259; sequence KGRLYCPTCKVTVNSASQLQAHNTGAKHRWMVEGH. The segment covering 262–284 has biased composition (basic residues); it reads APRRGRGRPVSRGGTGHKTKRVI. A Matrin-type 3 zinc finger spans residues 297–327; it reads FHCALCQLHVNSETQLKQHMSSRRHKDRLAG.

It localises to the nucleus. The polypeptide is Zinc finger protein 385C (Mus musculus (Mouse)).